Reading from the N-terminus, the 95-residue chain is Co-chaperonin GroES (95 aa).

The protein belongs to the GroES chaperonin family. Heptamer of 7 subunits arranged in a ring. Interacts with the chaperonin GroEL.

It localises to the cytoplasm. Functionally, together with the chaperonin GroEL, plays an essential role in assisting protein folding. The GroEL-GroES system forms a nano-cage that allows encapsulation of the non-native substrate proteins and provides a physical environment optimized to promote and accelerate protein folding. GroES binds to the apical surface of the GroEL ring, thereby capping the opening of the GroEL channel. This Chlorobium phaeobacteroides (strain BS1) protein is Co-chaperonin GroES.